The primary structure comprises 216 residues: Probable nicotinate-nucleotide adenylyltransferase (216 aa).

This sequence belongs to the NadD family.

It catalyses the reaction nicotinate beta-D-ribonucleotide + ATP + H(+) = deamido-NAD(+) + diphosphate. It participates in cofactor biosynthesis; NAD(+) biosynthesis; deamido-NAD(+) from nicotinate D-ribonucleotide: step 1/1. Catalyzes the reversible adenylation of nicotinate mononucleotide (NaMN) to nicotinic acid adenine dinucleotide (NaAD). The polypeptide is Probable nicotinate-nucleotide adenylyltransferase (Geobacillus thermodenitrificans (strain NG80-2)).